The sequence spans 452 residues: MAYRSCVVGFSSHSGCEVTPAGSSQPGTSGWGSCGLPGPGFSSRSLTSCRPAGVIPKVTVNPSLLVPLDLKVDPAVQQQKNQEKEEMKVLNDKFASLIGKVQALEQRNQLLETRWGFLQGQGSATFDLSHHYETFQGRLQEELRKVSQERGQLEASLLQVLEKVEEFRVRYEDEISKRTDLEFTFVQLKKDLDAECLRRTELETKLKGLQGFVELMRTVYEQELKDLTAQVKDVSVTVGLDSRCHIDLSGIVEEVKAQYDAIAARSLEEAEAYSRSQLEERAARSAEFGNSLQSSRCEIADLNVRIQKLRSQIVSVKSHCLKLEENIKVAEEQGELAFQDAKDKMAQLEAALQKAKQDMARQLREYQDLMNTKLALDIEIATYHKLMEGEESRMDLPSTTVVSAVQSRCRTTASKSGLSKTPSRKKKNRGGPVIKITEMSEKYLSQESEASE.

The tract at residues 1 to 82 is head; it reads MAYRSCVVGF…DPAVQQQKNQ (82 aa). Residue serine 45 is modified to Phosphoserine. The segment at 82–118 is coil 1A; sequence QEKEEMKVLNDKFASLIGKVQALEQRNQLLETRWGFL. Residues 83–394 enclose the IF rod domain; that stretch reads EKEEMKVLND…KLMEGEESRM (312 aa). Positions 119 to 135 are linker 1; that stretch reads QGQGSATFDLSHHYETF. The interval 136-227 is coil 1B; it reads QGRLQEELRK…TVYEQELKDL (92 aa). A linker 12 region spans residues 228–251; sequence TAQVKDVSVTVGLDSRCHIDLSGI. Positions 252-390 are coil 2; that stretch reads VEEVKAQYDA…ATYHKLMEGE (139 aa). Positions 391–452 are tail; it reads ESRMDLPSTT…YLSQESEASE (62 aa). Composition is skewed to polar residues over residues 411–421 and 443–452; these read TTASKSGLSKT and YLSQESEASE. A disordered region spans residues 411–452; that stretch reads TTASKSGLSKTPSRKKKNRGGPVIKITEMSEKYLSQESEASE.

It belongs to the intermediate filament family. Heterotetramer of two type I and two type II keratins.

This Rattus norvegicus (Rat) protein is Keratin, type II cytoskeletal 80 (Krt80).